The sequence spans 462 residues: Probable Xaa-Pro aminopeptidase NECHADRAFT_60613 (462 aa).

Mn(2+) contacts are provided by aspartate 259, aspartate 270, glutamate 393, and glutamate 433.

This sequence belongs to the peptidase M24B family. It depends on Mn(2+) as a cofactor.

It carries out the reaction Release of any N-terminal amino acid, including proline, that is linked to proline, even from a dipeptide or tripeptide.. Functionally, catalyzes the removal of a penultimate prolyl residue from the N-termini of peptides. The chain is Probable Xaa-Pro aminopeptidase NECHADRAFT_60613 from Fusarium vanettenii (strain ATCC MYA-4622 / CBS 123669 / FGSC 9596 / NRRL 45880 / 77-13-4) (Fusarium solani subsp. pisi).